Reading from the N-terminus, the 353-residue chain is DNA polymerase IV (353 aa).

A UmuC domain is found at Ile14–Gly198. The Mg(2+) site is built by Asp18 and Asp116. Glu117 is an active-site residue.

Belongs to the DNA polymerase type-Y family. In terms of assembly, monomer. Requires Mg(2+) as cofactor.

Its subcellular location is the cytoplasm. It catalyses the reaction DNA(n) + a 2'-deoxyribonucleoside 5'-triphosphate = DNA(n+1) + diphosphate. In terms of biological role, poorly processive, error-prone DNA polymerase involved in untargeted mutagenesis. Copies undamaged DNA at stalled replication forks, which arise in vivo from mismatched or misaligned primer ends. These misaligned primers can be extended by PolIV. Exhibits no 3'-5' exonuclease (proofreading) activity. May be involved in translesional synthesis, in conjunction with the beta clamp from PolIII. The sequence is that of DNA polymerase IV from Streptococcus pneumoniae serotype 4 (strain ATCC BAA-334 / TIGR4).